We begin with the raw amino-acid sequence, 229 residues long: Cytidylate kinase (229 aa).

Residue 10–18 coordinates ATP; that stretch reads GFSSCGKST.

Belongs to the cytidylate kinase family. Type 1 subfamily.

It is found in the cytoplasm. It catalyses the reaction CMP + ATP = CDP + ADP. The catalysed reaction is dCMP + ATP = dCDP + ADP. The chain is Cytidylate kinase from Bacteroides thetaiotaomicron (strain ATCC 29148 / DSM 2079 / JCM 5827 / CCUG 10774 / NCTC 10582 / VPI-5482 / E50).